The primary structure comprises 607 residues: Siderophore iron transporter mirC (607 aa).

12 consecutive transmembrane segments (helical) span residues 67–89, 129–148, 186–208, 223–245, 279–301, 311–328, 349–368, 388–410, 417–436, 446–468, 481–503, and 557–574; these read LVIA…QTIM, VFGR…LGYI, SLLN…VWIG, WGYG…SLLL, IFGL…LAAN, IVAM…LPFW, TALA…YFSV, GRVT…ILIK, VYVT…MLLY, VLGT…QLGV, TAMF…GAVW, and LLVL…LSLL. Over residues 584-593 the composition is skewed to basic and acidic residues; the sequence is SESSDHDDAS. The interval 584-607 is disordered; that stretch reads SESSDHDDASPRNGLGPGERAKRT.

This sequence belongs to the major facilitator superfamily.

It is found in the membrane. In Emericella nidulans (strain FGSC A4 / ATCC 38163 / CBS 112.46 / NRRL 194 / M139) (Aspergillus nidulans), this protein is Siderophore iron transporter mirC (mirC).